A 397-amino-acid chain; its full sequence is Acetate kinase (397 aa).

A Mg(2+)-binding site is contributed by N8. K15 lines the ATP pocket. Residue R89 participates in substrate binding. The Proton donor/acceptor role is filled by D146. ATP contacts are provided by residues 206–210, 281–283, and 329–333; these read HLGNG, DLR, and GVGEN. Mg(2+) is bound at residue E382.

The protein belongs to the acetokinase family. As to quaternary structure, homodimer. The cofactor is Mg(2+). It depends on Mn(2+) as a cofactor.

It is found in the cytoplasm. The catalysed reaction is acetate + ATP = acetyl phosphate + ADP. It participates in metabolic intermediate biosynthesis; acetyl-CoA biosynthesis; acetyl-CoA from acetate: step 1/2. Its function is as follows. Catalyzes the formation of acetyl phosphate from acetate and ATP. Can also catalyze the reverse reaction. The sequence is that of Acetate kinase from Bacillus cereus (strain ATCC 10987 / NRS 248).